A 471-amino-acid polypeptide reads, in one-letter code: Glutamate--tRNA ligase (471 aa).

The 'HIGH' region motif lies at 9-19; it reads PSPTGYLHVGG. Zn(2+) contacts are provided by Cys-98, Cys-100, Cys-125, and His-127. Residues 237-241 carry the 'KMSKS' region motif; it reads KLSKR. Lys-240 is an ATP binding site.

Belongs to the class-I aminoacyl-tRNA synthetase family. Glutamate--tRNA ligase type 1 subfamily. Monomer. Zn(2+) is required as a cofactor.

It localises to the cytoplasm. It catalyses the reaction tRNA(Glu) + L-glutamate + ATP = L-glutamyl-tRNA(Glu) + AMP + diphosphate. Functionally, catalyzes the attachment of glutamate to tRNA(Glu) in a two-step reaction: glutamate is first activated by ATP to form Glu-AMP and then transferred to the acceptor end of tRNA(Glu). The chain is Glutamate--tRNA ligase from Salmonella enteritidis PT4 (strain P125109).